A 230-amino-acid polypeptide reads, in one-letter code: Large ribosomal subunit protein uL1 (230 aa).

This sequence belongs to the universal ribosomal protein uL1 family. Part of the 50S ribosomal subunit.

Its function is as follows. Binds directly to 23S rRNA. The L1 stalk is quite mobile in the ribosome, and is involved in E site tRNA release. In terms of biological role, protein L1 is also a translational repressor protein, it controls the translation of the L11 operon by binding to its mRNA. The protein is Large ribosomal subunit protein uL1 of Bacillus anthracis (strain A0248).